Here is a 1028-residue protein sequence, read N- to C-terminus: Contactin-3 (1028 aa).

The N-terminal stretch at 1–19 (MMFPWKQLILLSFIGCLGG) is a signal peptide. Ig-like C2-type domains are found at residues 26 to 117 (PVFI…AKLQ), 122 to 208 (ENFK…ARVL), 227 to 313 (PKIE…GRLT), 318 to 402 (PHWV…AELK), 408 to 497 (PDFS…LVVT), and 499 to 593 (PTRI…ADLI). Cystine bridges form between Cys50–Cys100, Cys144–Cys196, Cys249–Cys297, Cys339–Cys386, and Cys431–Cys479. Asn65 and Asn193 each carry an N-linked (GlcNAc...) asparagine glycan. N-linked (GlcNAc...) asparagine glycans are attached at residues Asn375, Asn468, and Asn489. An intrachain disulfide couples Cys521 to Cys577. 4 Fibronectin type-III domains span residues 600–698 (PPEN…TEEA), 703–800 (PPSE…SAEE), 805–901 (APSQ…TKKT), and 902–998 (PPSQ…TSMD). Residues 684–713 (GEPSLPSEKVRTEEAVPEVPPSEVNGGGGS) are disordered. N-linked (GlcNAc...) asparagine glycosylation is found at Asn765, Asn860, Asn895, Asn913, Asn931, and Asn956. The GPI-anchor amidated serine moiety is linked to residue Ser1002. Positions 1003–1028 (TSAISNVHPMSSYMPIVLFLIVYVLW) are cleaved as a propeptide — removed in mature form.

It belongs to the immunoglobulin superfamily. Contactin family. Interacts with PTPRG. In terms of tissue distribution, in brain, it is expressed in frontal lobe, occipital lobe, cerebellum and amygdala.

Its subcellular location is the cell membrane. Its function is as follows. Contactins mediate cell surface interactions during nervous system development. Has some neurite outgrowth-promoting activity. In Homo sapiens (Human), this protein is Contactin-3 (CNTN3).